We begin with the raw amino-acid sequence, 360 residues long: MLLLLAEFLQQFYKGFAVFQYLSLRGILGVLTALTLSLCLGPWMIRTLQMRQIGQSVRNDGPQSHLSKSGTPTMGGALILSSIGISTLLWADLSNRYVWVVLLVTLLFGAIGWVDDYRKVIEKNSRGLPSRWKYFWQSVFGLCAAIFLYTTAPSATETTLIVPMLKDVRIPLGIGFIVLTYFVIVGSSNAVNLTDGLDGLAIMPTVMVGGALGIFCYLSGNVKFAEYLLIPYVPGAGELIVFSGALIGAGLGFLWFNTYPAQVFMGDVGALALGAALGTMAVIVRQEIVLFIMGGVFVMETLSVVIQVASFKLTGRRVFRMAPIHHHFELKGWPEPRVIVRFWIITVILVLIGLATLKLR.

The next 10 membrane-spanning stretches (helical) occupy residues 25 to 45 (RGILGVLTALTLSLCLGPWMI), 73 to 93 (TMGGALILSSIGISTLLWADL), 97 to 117 (YVWVVLLVTLLFGAIGWVDDY), 135 to 155 (FWQSVFGLCAAIFLYTTAPSA), 170 to 190 (IPLGIGFIVLTYFVIVGSSNA), 199 to 219 (GLAIMPTVMVGGALGIFCYLS), 236 to 256 (AGELIVFSGALIGAGLGFLWF), 263 to 283 (VFMGDVGALALGAALGTMAVI), 288 to 308 (IVLFIMGGVFVMETLSVVIQV), and 338 to 358 (VIVRFWIITVILVLIGLATLK).

The protein belongs to the glycosyltransferase 4 family. MraY subfamily. Mg(2+) is required as a cofactor.

It localises to the cell inner membrane. It carries out the reaction UDP-N-acetyl-alpha-D-muramoyl-L-alanyl-gamma-D-glutamyl-meso-2,6-diaminopimeloyl-D-alanyl-D-alanine + di-trans,octa-cis-undecaprenyl phosphate = di-trans,octa-cis-undecaprenyl diphospho-N-acetyl-alpha-D-muramoyl-L-alanyl-D-glutamyl-meso-2,6-diaminopimeloyl-D-alanyl-D-alanine + UMP. The protein operates within cell wall biogenesis; peptidoglycan biosynthesis. In terms of biological role, catalyzes the initial step of the lipid cycle reactions in the biosynthesis of the cell wall peptidoglycan: transfers peptidoglycan precursor phospho-MurNAc-pentapeptide from UDP-MurNAc-pentapeptide onto the lipid carrier undecaprenyl phosphate, yielding undecaprenyl-pyrophosphoryl-MurNAc-pentapeptide, known as lipid I. This chain is Phospho-N-acetylmuramoyl-pentapeptide-transferase, found in Pseudomonas savastanoi pv. phaseolicola (strain 1448A / Race 6) (Pseudomonas syringae pv. phaseolicola (strain 1448A / Race 6)).